We begin with the raw amino-acid sequence, 55 residues long: MAKAAMLKIKLLSTADTGYFYVTKKNARTKTEKLSFKKYDPVVRKHVEFKETKIK.

The protein belongs to the bacterial ribosomal protein bL33 family.

The polypeptide is Large ribosomal subunit protein bL33 (Methylocella silvestris (strain DSM 15510 / CIP 108128 / LMG 27833 / NCIMB 13906 / BL2)).